Consider the following 315-residue polypeptide: Acetyl-coenzyme A carboxylase carboxyl transferase subunit alpha (315 aa).

Residues 39–293 (RLQDKSSTLT…RADLIEQLDM (255 aa)) enclose the CoA carboxyltransferase C-terminal domain.

This sequence belongs to the AccA family. Acetyl-CoA carboxylase is a heterohexamer composed of biotin carboxyl carrier protein (AccB), biotin carboxylase (AccC) and two subunits each of ACCase subunit alpha (AccA) and ACCase subunit beta (AccD).

It localises to the cytoplasm. It carries out the reaction N(6)-carboxybiotinyl-L-lysyl-[protein] + acetyl-CoA = N(6)-biotinyl-L-lysyl-[protein] + malonyl-CoA. Its pathway is lipid metabolism; malonyl-CoA biosynthesis; malonyl-CoA from acetyl-CoA: step 1/1. In terms of biological role, component of the acetyl coenzyme A carboxylase (ACC) complex. First, biotin carboxylase catalyzes the carboxylation of biotin on its carrier protein (BCCP) and then the CO(2) group is transferred by the carboxyltransferase to acetyl-CoA to form malonyl-CoA. This chain is Acetyl-coenzyme A carboxylase carboxyl transferase subunit alpha, found in Pseudomonas entomophila (strain L48).